The following is a 201-amino-acid chain: UPF0301 protein Arad_1256 (201 aa).

This sequence belongs to the UPF0301 (AlgH) family.

This is UPF0301 protein Arad_1256 from Rhizobium rhizogenes (strain K84 / ATCC BAA-868) (Agrobacterium radiobacter).